Reading from the N-terminus, the 323-residue chain is Synaptonemal complex central element protein 1 (323 aa).

Polar residues predominate over residues 1-10 (MAGRPGSSNA). Disordered stretches follow at residues 1 to 31 (MAGR…SSQK) and 294 to 323 (KQEE…PSTK). 2 stretches are compositionally biased toward basic and acidic residues: residues 20 to 31 (DEARGQAESSQK) and 313 to 323 (SEEKDQEPSTK). Positions 25–290 (QAESSQKIED…EKLGVQVLAQ (266 aa)) form a coiled coil.

The protein belongs to the SYCE family. Homodimer. Found in a complex with SYCP1 and SYCE2. Interacts with SYCP1, SYCE2 and SYCE3. Interacts with SIX6OS1.

The protein localises to the nucleus. The protein resides in the chromosome. Its function is as follows. Major component of the transverse central element of synaptonemal complexes (SCS), formed between homologous chromosomes during meiotic prophase. Requires SYCP1 in order to be incorporated into the central element. May have a role in the synaptonemal complex assembly, stabilization and recombination. In Bos taurus (Bovine), this protein is Synaptonemal complex central element protein 1 (SYCE1).